The sequence spans 813 residues: Glycerol-3-phosphate acyltransferase (813 aa).

The HXXXXD motif signature appears at 304 to 309 (CHRSHI).

Belongs to the GPAT/DAPAT family.

The protein localises to the cell inner membrane. The enzyme catalyses sn-glycerol 3-phosphate + an acyl-CoA = a 1-acyl-sn-glycero-3-phosphate + CoA. It participates in phospholipid metabolism; CDP-diacylglycerol biosynthesis; CDP-diacylglycerol from sn-glycerol 3-phosphate: step 1/3. This chain is Glycerol-3-phosphate acyltransferase, found in Actinobacillus succinogenes (strain ATCC 55618 / DSM 22257 / CCUG 43843 / 130Z).